We begin with the raw amino-acid sequence, 405 residues long: Patatin-like protein 2 (405 aa).

Residues 24–230 enclose the PNPLA domain; that stretch reads LSIDGGGVRG…AANNPTLCAM (207 aa). A GXGXXG motif is present at residues 28 to 33; that stretch reads GGGVRG. The GXSXG motif lies at 66–70; it reads GTSTG. S68 (nucleophile) is an active-site residue. D217 (proton acceptor) is an active-site residue. Positions 217–219 match the DGA/G motif; sequence DGG.

The protein belongs to the patatin family.

Its function is as follows. Possesses non-specific lipolytic acyl hydrolase (LAH) activity. Hydrolyzes phospholipids as well as galactolipids. May play a role in disease resistance. The chain is Patatin-like protein 2 (PLP2) from Oryza sativa subsp. indica (Rice).